A 168-amino-acid chain; its full sequence is Cysteine-rich perinuclear theca protein 1 (168 aa).

The interval 144 to 168 is disordered; that stretch reads NVSDPEEVPPCLDSDPFPNGDLASS.

As to expression, specifically expressed in spermatozoa (at protein level). Detected from the elongated spermatid stage onwards; not found in immature germ cells or somatic cells (at protein level).

It localises to the cytoplasm. It is found in the cytoskeleton. The protein localises to the perinuclear theca. This chain is Cysteine-rich perinuclear theca protein 1, found in Mus musculus (Mouse).